We begin with the raw amino-acid sequence, 91 residues long: Essential MCU regulator, mitochondrial (91 aa).

The chain crosses the membrane as a helical span at residues 45-65 (VIPFGLLGVVLTVIPGLLIGA).

Belongs to the SMDT1/EMRE family.

The protein localises to the mitochondrion inner membrane. Functionally, essential regulatory subunit of the mitochondrial calcium uniporter (mcu) channel, a protein that mediates calcium uptake into mitochondria. The sequence is that of Essential MCU regulator, mitochondrial from Aedes aegypti (Yellowfever mosquito).